We begin with the raw amino-acid sequence, 305 residues long: Tyrosine recombinase XerC (305 aa).

A Core-binding (CB) domain is found at 4–95; that stretch reads TSIQALINKW…AVKNFYRFLE (92 aa). The 183-residue stretch at 116-298 folds into the Tyr recombinase domain; it reads LLPKALSEDD…SIKHLEAVYT (183 aa). Active-site residues include Arg159, Lys182, His250, Arg253, and His276. Catalysis depends on Tyr285, which acts as the O-(3'-phospho-DNA)-tyrosine intermediate.

This sequence belongs to the 'phage' integrase family. XerC subfamily. In terms of assembly, forms a cyclic heterotetrameric complex composed of two molecules of XerC and two molecules of XerD.

It localises to the cytoplasm. Site-specific tyrosine recombinase, which acts by catalyzing the cutting and rejoining of the recombining DNA molecules. The XerC-XerD complex is essential to convert dimers of the bacterial chromosome into monomers to permit their segregation at cell division. It also contributes to the segregational stability of plasmids. The protein is Tyrosine recombinase XerC of Rickettsia peacockii (strain Rustic).